A 436-amino-acid chain; its full sequence is MQVLRLDRRHYKSGKIRRAMSSRIPGFYKLSVEERLKKVAEFAGLSDEEVKAVLSQGLPLDVADRMIENVIGTFELPLGIATNFLIDGKDYLIPMAIEEPSVVAAASNAARMARESGGFTTDYTGSLMIGQIQVTKLLNPNAAKFEVLRQKDEIIERANECDPMLVNLGGGCKDIEARVIDTIMGKMLIVHLIVDVKDAMGANAVNTMCEKVAPFIERITGGKVYLRIISNLAAYRLARAKAVFDKDVIGGEEVVEGIMLAYAFAAADPFRCATHNKGIMNGISALMIATGNDFRAIEAGAHSYAAIGGYKPLTTYEVDRKGNLVGTIEIPMAVGVIGGATKVNPLAKISLKILGVNTAEELARVAAALGLAQNFAALRALATEGIQRGHMELHARNLAIMAGATGDEVDRVVEIMVRDGKIRLDYAKEVLERLRS.

Active-site charge relay system residues include glutamate 99, lysine 277, and aspartate 293. Histidine 390 (proton donor) is an active-site residue.

Belongs to the HMG-CoA reductase family.

The enzyme catalyses (R)-mevalonate + 2 NADP(+) + CoA = (3S)-3-hydroxy-3-methylglutaryl-CoA + 2 NADPH + 2 H(+). Its pathway is metabolic intermediate biosynthesis; (R)-mevalonate biosynthesis; (R)-mevalonate from acetyl-CoA: step 3/3. Converts HMG-CoA to mevalonate. This is 3-hydroxy-3-methylglutaryl-coenzyme A reductase (hmgA) from Archaeoglobus fulgidus (strain ATCC 49558 / DSM 4304 / JCM 9628 / NBRC 100126 / VC-16).